The chain runs to 450 residues: Glucose-6-phosphate isomerase (450 aa).

Thr-39 bears the Phosphothreonine mark. Glu-291 acts as the Proton donor in catalysis. Residues His-312 and Lys-426 contribute to the active site.

This sequence belongs to the GPI family.

It is found in the cytoplasm. The enzyme catalyses alpha-D-glucose 6-phosphate = beta-D-fructose 6-phosphate. The protein operates within carbohydrate biosynthesis; gluconeogenesis. It functions in the pathway carbohydrate degradation; glycolysis; D-glyceraldehyde 3-phosphate and glycerone phosphate from D-glucose: step 2/4. Catalyzes the reversible isomerization of glucose-6-phosphate to fructose-6-phosphate. The chain is Glucose-6-phosphate isomerase from Bacillus cereus (strain ATCC 10987 / NRS 248).